Consider the following 622-residue polypeptide: UvrABC system protein C (622 aa).

The GIY-YIG domain occupies 13 to 92 (EKPGVYLMKN…IKKYRPKYNI (80 aa)). The 36-residue stretch at 204–239 (KDILDKLKNQMEEASNSLQFEKAASLRDKIFAVKKI) folds into the UVR domain.

This sequence belongs to the UvrC family. Interacts with UvrB in an incision complex.

It is found in the cytoplasm. In terms of biological role, the UvrABC repair system catalyzes the recognition and processing of DNA lesions. UvrC both incises the 5' and 3' sides of the lesion. The N-terminal half is responsible for the 3' incision and the C-terminal half is responsible for the 5' incision. This chain is UvrABC system protein C, found in Clostridium tetani (strain Massachusetts / E88).